Here is a 152-residue protein sequence, read N- to C-terminus: Putative pre-16S rRNA nuclease (152 aa).

The protein belongs to the YqgF nuclease family.

The protein localises to the cytoplasm. Could be a nuclease involved in processing of the 5'-end of pre-16S rRNA. The polypeptide is Putative pre-16S rRNA nuclease (Nitrosococcus oceani (strain ATCC 19707 / BCRC 17464 / JCM 30415 / NCIMB 11848 / C-107)).